The sequence spans 1471 residues: Myosin-4 (1471 aa).

The Myosin N-terminal SH3-like domain maps to 4–57; the sequence is EVGTKCWYPHKEQGWIGGEVTKNDFFEGTFHLELKLEDGETVSIETNSFENDDD. The Myosin motor domain occupies 71–777; sequence ESTDDLTTLS…MLAFLEKLRT (707 aa). 165–172 lines the ATP pocket; that stretch reads GESGAGKT. Residues 647 to 669 form an actin-binding region; that stretch reads LGELMAIINSTNVHYIRCIKPNS. 5 consecutive IQ domains span residues 781-801, 804-824, 829-849, 876-898, and 899-928; these read NEICIIIQKKIRARYYRLQYL, MESIKKCQSQIRSLLVRTRVD, TRAAILLQTNIRALWKREYYR, MLMAAVIIQSYIRSYGHKTDYRT, and LKRSSILVQSAMRMQLARRRYIVLQKEVEE. The stretch at 938-1063 forms a coiled coil; the sequence is GLLEEAIEFK…LAFIENVIAQ (126 aa). The Dilute domain occupies 1164 to 1419; the sequence is SKVLLTVESI…LNYLANVIKR (256 aa).

Belongs to the TRAFAC class myosin-kinesin ATPase superfamily. Myosin family. As to quaternary structure, interacts with SHE2 and SHE3.

It localises to the bud. Its function is as follows. Part of the mRNA localization machinery that restricts accumulation of certain proteins to the bud and in the daughter cell. Recruited to specific mRNAs including the ASH1 mRNA, coding for a repressor of the HO endonuclease, via its interaction with SHE3. This Saccharomyces cerevisiae (strain ATCC 204508 / S288c) (Baker's yeast) protein is Myosin-4 (MYO4).